The primary structure comprises 315 residues: Methenyltetrahydromethanopterin cyclohydrolase (315 aa).

This sequence belongs to the MCH family.

Its subcellular location is the cytoplasm. The enzyme catalyses 5,10-methenyl-5,6,7,8-tetrahydromethanopterin + H2O = N(5)-formyl-5,6,7,8-tetrahydromethanopterin + H(+). It participates in one-carbon metabolism; methanogenesis from CO(2); 5,10-methenyl-5,6,7,8-tetrahydromethanopterin from CO(2): step 3/3. Its function is as follows. Catalyzes the reversible interconversion of 5-formyl-H(4)MPT to methenyl-H(4)MPT(+). This Methanoculleus marisnigri (strain ATCC 35101 / DSM 1498 / JR1) protein is Methenyltetrahydromethanopterin cyclohydrolase.